Reading from the N-terminus, the 183-residue chain is Heavy metal-associated isoprenylated plant protein 44 (183 aa).

The region spanning leucine 50–glutamate 113 is the HMA domain. 2 residues coordinate a metal cation: cysteine 61 and cysteine 64. Residue cysteine 180 is modified to Cysteine methyl ester. A lipid anchor (S-farnesyl cysteine) is attached at cysteine 180. The propeptide at arginine 181–methionine 183 is removed in mature form.

It belongs to the HIPP family.

Functionally, heavy-metal-binding protein. The sequence is that of Heavy metal-associated isoprenylated plant protein 44 from Arabidopsis thaliana (Mouse-ear cress).